The sequence spans 353 residues: Photosystem II D2 protein (353 aa).

T2 carries the post-translational modification N-acetylthreonine. The residue at position 2 (T2) is a Phosphothreonine. The chain crosses the membrane as a helical span at residues C41–T61. Position 118 (H118) interacts with chlorophyll a. The chain crosses the membrane as a helical span at residues G125 to P141. Q130 and N143 together coordinate pheophytin a. A helical transmembrane segment spans residues V153 to S166. A chlorophyll a-binding site is contributed by H198. Residues A208–D228 traverse the membrane as a helical segment. Residues H215 and F262 each contribute to the a plastoquinone site. H215 contributes to the Fe cation binding site. Fe cation is bound at residue H269. A helical membrane pass occupies residues G279–R295.

Belongs to the reaction center PufL/M/PsbA/D family. In terms of assembly, PSII is composed of 1 copy each of membrane proteins PsbA, PsbB, PsbC, PsbD, PsbE, PsbF, PsbH, PsbI, PsbJ, PsbK, PsbL, PsbM, PsbT, PsbX, PsbY, PsbZ, Psb30/Ycf12, at least 3 peripheral proteins of the oxygen-evolving complex and a large number of cofactors. It forms dimeric complexes. The D1/D2 heterodimer binds P680, chlorophylls that are the primary electron donor of PSII, and subsequent electron acceptors. It shares a non-heme iron and each subunit binds pheophytin, quinone, additional chlorophylls, carotenoids and lipids. There is also a Cl(-1) ion associated with D1 and D2, which is required for oxygen evolution. The PSII complex binds additional chlorophylls, carotenoids and specific lipids. is required as a cofactor.

It localises to the plastid. The protein resides in the chloroplast thylakoid membrane. The catalysed reaction is 2 a plastoquinone + 4 hnu + 2 H2O = 2 a plastoquinol + O2. Photosystem II (PSII) is a light-driven water:plastoquinone oxidoreductase that uses light energy to abstract electrons from H(2)O, generating O(2) and a proton gradient subsequently used for ATP formation. It consists of a core antenna complex that captures photons, and an electron transfer chain that converts photonic excitation into a charge separation. The D1/D2 (PsbA/PsbD) reaction center heterodimer binds P680, the primary electron donor of PSII as well as several subsequent electron acceptors. D2 is needed for assembly of a stable PSII complex. This chain is Photosystem II D2 protein, found in Liriodendron tulipifera (Tuliptree).